A 522-amino-acid chain; its full sequence is Hydroxymethylglutaryl-CoA synthase, cytoplasmic (522 aa).

Residues Asp-43 and Ala-44 each coordinate (3S)-3-hydroxy-3-methylglutaryl-CoA. Residue Glu-95 is the Proton donor/acceptor of the active site. Residues Cys-129, Asn-167, Thr-171, Ser-221, His-264, Lys-273, Asn-344, and Ser-378 each contribute to the (3S)-3-hydroxy-3-methylglutaryl-CoA site. The active-site Acyl-thioester intermediate is the Cys-129. His-264 functions as the Proton donor/acceptor in the catalytic mechanism.

Belongs to the thiolase-like superfamily. HMG-CoA synthase family. Homodimer.

The protein localises to the cytoplasm. It catalyses the reaction acetoacetyl-CoA + acetyl-CoA + H2O = (3S)-3-hydroxy-3-methylglutaryl-CoA + CoA + H(+). It participates in metabolic intermediate biosynthesis; (R)-mevalonate biosynthesis; (R)-mevalonate from acetyl-CoA: step 2/3. Functionally, catalyzes the condensation of acetyl-CoA with acetoacetyl-CoA to form HMG-CoA, which is converted by HMG-CoA reductase (HMGCR) into mevalonate, a precursor for cholesterol synthesis. The chain is Hydroxymethylglutaryl-CoA synthase, cytoplasmic (HMGCS1) from Gallus gallus (Chicken).